A 135-amino-acid polypeptide reads, in one-letter code: Transcription antitermination protein NusB (135 aa).

Belongs to the NusB family.

In terms of biological role, involved in transcription antitermination. Required for transcription of ribosomal RNA (rRNA) genes. Binds specifically to the boxA antiterminator sequence of the ribosomal RNA (rrn) operons. The chain is Transcription antitermination protein NusB from Lacticaseibacillus casei (strain BL23) (Lactobacillus casei).